The primary structure comprises 376 residues: Alanine racemase (376 aa).

Lys40 functions as the Proton acceptor; specific for D-alanine in the catalytic mechanism. An N6-(pyridoxal phosphate)lysine modification is found at Lys40. Position 138 (Arg138) interacts with substrate. The active-site Proton acceptor; specific for L-alanine is Tyr270. Met317 serves as a coordination point for substrate.

It belongs to the alanine racemase family. Requires pyridoxal 5'-phosphate as cofactor.

The enzyme catalyses L-alanine = D-alanine. It functions in the pathway amino-acid biosynthesis; D-alanine biosynthesis; D-alanine from L-alanine: step 1/1. In terms of biological role, catalyzes the interconversion of L-alanine and D-alanine. May also act on other amino acids. In Lactobacillus delbrueckii subsp. bulgaricus (strain ATCC 11842 / DSM 20081 / BCRC 10696 / JCM 1002 / NBRC 13953 / NCIMB 11778 / NCTC 12712 / WDCM 00102 / Lb 14), this protein is Alanine racemase (alr).